Consider the following 175-residue polypeptide: Large ribosomal subunit protein uL10 (175 aa).

The protein belongs to the universal ribosomal protein uL10 family. In terms of assembly, part of the ribosomal stalk of the 50S ribosomal subunit. The N-terminus interacts with L11 and the large rRNA to form the base of the stalk. The C-terminus forms an elongated spine to which L12 dimers bind in a sequential fashion forming a multimeric L10(L12)X complex.

Forms part of the ribosomal stalk, playing a central role in the interaction of the ribosome with GTP-bound translation factors. This chain is Large ribosomal subunit protein uL10, found in Prochlorococcus marinus (strain MIT 9301).